We begin with the raw amino-acid sequence, 994 residues long: Phosphoenolpyruvate carboxylase (994 aa).

Positions 1–66 (MKSSGSARAT…QGRTREDKDR (66 aa)) are disordered. 2 stretches are compositionally biased toward low complexity: residues 14 to 25 (AVSSSSAPAHAE) and 41 to 54 (AAAR…AASA). Residues H204 and K646 contribute to the active site.

The protein belongs to the PEPCase type 1 family. The cofactor is Mg(2+).

The catalysed reaction is oxaloacetate + phosphate = phosphoenolpyruvate + hydrogencarbonate. Functionally, forms oxaloacetate, a four-carbon dicarboxylic acid source for the tricarboxylic acid cycle. This chain is Phosphoenolpyruvate carboxylase, found in Burkholderia mallei (strain NCTC 10247).